Reading from the N-terminus, the 160-residue chain is Small ribosomal subunit protein uS7 (160 aa).

The protein belongs to the universal ribosomal protein uS7 family. As to quaternary structure, part of the 30S ribosomal subunit. Contacts proteins S9 and S11.

Its function is as follows. One of the primary rRNA binding proteins, it binds directly to 16S rRNA where it nucleates assembly of the head domain of the 30S subunit. Is located at the subunit interface close to the decoding center, probably blocks exit of the E-site tRNA. This is Small ribosomal subunit protein uS7 from Rickettsia akari (strain Hartford).